We begin with the raw amino-acid sequence, 310 residues long: Ornithine carbamoyltransferase (310 aa).

Carbamoyl phosphate is bound by residues 57–60 (STRT), Q84, R108, and 135–138 (HPCQ). Residues N166, D229, and 233-234 (SM) contribute to the L-ornithine site. Carbamoyl phosphate-binding positions include 269–270 (CL) and R297.

It belongs to the aspartate/ornithine carbamoyltransferase superfamily. OTCase family.

Its subcellular location is the cytoplasm. The catalysed reaction is carbamoyl phosphate + L-ornithine = L-citrulline + phosphate + H(+). It participates in amino-acid biosynthesis; L-arginine biosynthesis; L-arginine from L-ornithine and carbamoyl phosphate: step 1/3. Reversibly catalyzes the transfer of the carbamoyl group from carbamoyl phosphate (CP) to the N(epsilon) atom of ornithine (ORN) to produce L-citrulline. The polypeptide is Ornithine carbamoyltransferase (Thermosynechococcus vestitus (strain NIES-2133 / IAM M-273 / BP-1)).